The primary structure comprises 539 residues: MAGDGVENAKPPQKQEDLQPHPVKDQLYGITYCLTSPPPWPETILLGFQHYLVMLGTTVLIPTMLVSKIDARNEDKVKLIQTLLFVSGINTLFQSFFGTRLPAVIGASYSYVPTTMSIVLAARYNDIMDPQKRFEQIMRGIQGALIIASFLHILVGFSGLWRNVTRFLSPLSAVPLVAFSGFGLYEQGFPMLAKCIEIGLPEIILLVIFSQYIPHLMQGETCSNFFHRFAVIFSVVIVWLYAYILTIGGAYSNTEINTQISCRTDRAGIISASPWIRVPHPIQWGGAPTFNAGDIFAMMAASFVSLVESTGTYIAVSRYASATPIPPSVLSRGIGWQGFGILLCGLFGAGNATSVSVENAGLLAVTRVGSRRVIQVAAGFMIFFSILGKFGAIFASIPAPIVAALYCLFFSYVGAGGLSLIQFCNLNSFRTKFILGFSIFMGLSIPQYFYQYTTLETYGPVRTSATWFNNIINVPFSSKAFVSGILAFFLDTTLPPKDKTTKKDRGLVWWKRFKSFQSDNRSEEFYSLPLNLSKYFPSH.

The segment at Met-1–Pro-20 is disordered. 12 consecutive transmembrane segments (helical) span residues Ile-44–Met-64, Leu-79–Thr-99, Leu-101–Ala-121, Ile-141–Trp-161, Phe-167–Gln-187, Phe-189–Phe-209, Phe-229–Gly-249, Ile-295–Ala-315, Val-368–Gly-388, Ala-399–Ile-421, Phe-433–Thr-453, and Asn-470–Leu-490.

The protein belongs to the nucleobase:cation symporter-2 (NCS2) (TC 2.A.40) family. Highly expressed in ovules, endosperm and embryo.

Its subcellular location is the cell membrane. The sequence is that of Nucleobase-ascorbate transporter 8 (NAT8) from Arabidopsis thaliana (Mouse-ear cress).